A 636-amino-acid chain; its full sequence is Biosynthetic arginine decarboxylase (636 aa).

Lys110 is modified (N6-(pyridoxal phosphate)lysine). 290–300 serves as a coordination point for substrate; that stretch reads IDVGGGLGVDY.

The protein belongs to the Orn/Lys/Arg decarboxylase class-II family. SpeA subfamily. Mg(2+) is required as a cofactor. Pyridoxal 5'-phosphate serves as cofactor.

It carries out the reaction L-arginine + H(+) = agmatine + CO2. Its function is as follows. Catalyzes the biosynthesis of agmatine from arginine. This is Biosynthetic arginine decarboxylase from Pseudomonas aeruginosa (strain ATCC 15692 / DSM 22644 / CIP 104116 / JCM 14847 / LMG 12228 / 1C / PRS 101 / PAO1).